The following is a 95-amino-acid chain: Small ribosomal subunit protein bS18 (95 aa).

This sequence belongs to the bacterial ribosomal protein bS18 family. In terms of assembly, part of the 30S ribosomal subunit. Forms a tight heterodimer with protein bS6.

Functionally, binds as a heterodimer with protein bS6 to the central domain of the 16S rRNA, where it helps stabilize the platform of the 30S subunit. The sequence is that of Small ribosomal subunit protein bS18 from Rickettsia peacockii (strain Rustic).